The primary structure comprises 3354 residues: Cadherin-23 (3354 aa).

The first 23 residues, 1–23 (MGRHVATSCHVAWLLVLISGCWG), serve as a signal peptide directing secretion. The Extracellular segment spans residues 24–3064 (QVNRLPFFTN…SVRLPDDMSA (3041 aa)). Cadherin domains lie at 34 to 132 (HFFD…APTF), 133 to 236 (HNQP…DPIF), 237 to 348 (INLP…APEF), 349 to 460 (NSSE…RPIF), 461 to 561 (SQPL…VPTF), 562 to 671 (QKDA…PPTF), 672 to 784 (SKPA…APYY), 779 to 890 (KDAP…DPTF), 891 to 995 (QNLP…TPTF), 996 to 1102 (FPAV…RPIF), 1103 to 1208 (LQSS…APVF), 1210 to 1313 (QQQY…AVQF), 1314 to 1418 (SNAS…SPRF), 1420 to 1527 (FTSD…PPVI), 1529 to 1634 (SPFG…APMF), 1635 to 1744 (QQPH…VPTF), 1745 to 1851 (PRDY…DPVL), 1852 to 1959 (LNLP…HPLF), 1960 to 2069 (TKST…RPTF), 2070 to 2174 (SPAT…RPEF), 2175 to 2293 (LNPI…TPQF), 2297 to 2402 (GITY…NPIF), 2403 to 2509 (DQPS…RPQF), 2510 to 2611 (SKPQ…RPVF), 2614 to 2722 (PPNG…EPLF), 2729 to 2846 (SPQY…PPRF), and 2847 to 2975 (TKAE…EEEF). N-linked (GlcNAc...) asparagine glycans are attached at residues Asn-155 and Asn-206. 32 N-linked (GlcNAc...) asparagine glycosylation sites follow: Asn-349, Asn-393, Asn-434, Asn-466, Asn-472, Asn-652, Asn-694, Asn-765, Asn-810, Asn-827, Asn-941, Asn-1001, Asn-1018, Asn-1171, Asn-1282, Asn-1315, Asn-1473, Asn-1534, Asn-1651, Asn-1667, Asn-1818, Asn-1857, Asn-1889, Asn-1902, Asn-2013, Asn-2050, Asn-2129, Asn-2168, Asn-2195, Asn-2263, Asn-2357, and Asn-2369. N-linked (GlcNAc...) asparagine glycans are attached at residues Asn-2616, Asn-2749, Asn-2808, Asn-2877, Asn-2896, Asn-2941, and Asn-2981. A helical transmembrane segment spans residues 3065–3085 (LQMAIIVLAILLFLAAMLFVL). Residues 3086-3354 (MNWYYRTVHK…METPLEITEL (269 aa)) are Cytoplasmic-facing.

In terms of assembly, antiparallel heterodimer with PCDH15. Interacts with USH1C and USH1G. As to expression, particularly strong expression in the retina. Found also in the cochlea.

It localises to the cell membrane. In terms of biological role, cadherins are calcium-dependent cell adhesion proteins. They preferentially interact with themselves in a homophilic manner in connecting cells. CDH23 is required for establishing and/or maintaining the proper organization of the stereocilia bundle of hair cells in the cochlea and the vestibule during late embryonic/early postnatal development. It is part of the functional network formed by USH1C, USH1G, CDH23 and MYO7A that mediates mechanotransduction in cochlear hair cells. Required for normal hearing. This is Cadherin-23 from Homo sapiens (Human).